The primary structure comprises 83 residues: Holin-like protein 24.1 (83 aa).

Residues M1 to K45 are a coiled coil. A helical transmembrane segment spans residues I57–V77.

It is found in the host cell inner membrane. In terms of biological role, probably functions as a holin together with holin-like protein 26. Accumulates harmlessly in the cytoplasmic membrane until it reaches a critical concentration that triggers the formation of micron-scale pores (holes) causing host cell membrane disruption and endolysin escape into the periplasmic space. Determines the precise timing of host cell lysis. The sequence is that of Holin-like protein 24.1 (24.1) from Bacillus subtilis (Bacteriophage SPP1).